The primary structure comprises 375 residues: Patatin-1-Kuras 2 (375 aa).

Residues 1-11 (MILATTSSTFA) form the signal peptide. A PNPLA domain is found at 20–218 (LSIDGGGIKG…TVADPALLSV (199 aa)). Residues 24 to 29 (GGGIKG) carry the GXGXXG motif. The short motif at 63-67 (GTSTG) is the GXSXG element. S65 acts as the Nucleophile in catalysis. An N-linked (GlcNAc...) asparagine glycan is attached at N103. The active-site Proton acceptor is the D204. A DGA/G motif is present at residues 204–206 (DGA). Residues 349 to 373 (ETYEEALKRFAKLLSDRKKLRANKA) adopt a coiled-coil conformation.

It belongs to the patatin family. In terms of tissue distribution, tuber.

It is found in the vacuole. In terms of biological role, probable lipolytic acyl hydrolase (LAH), an activity which is thought to be involved in the response of tubers to pathogens. This Solanum tuberosum (Potato) protein is Patatin-1-Kuras 2 (pat1-k2).